We begin with the raw amino-acid sequence, 226 residues long: Histidine biosynthesis bifunctional protein HisIE (226 aa).

The segment at 1–131 (MMPMNQEFIQ…STFNRPLSNT (131 aa)) is phosphoribosyl-AMP cyclohydrolase. The tract at residues 132–226 (CSELFEVIKD…KRRQSKSNPK (95 aa)) is phosphoribosyl-ATP pyrophosphohydrolase.

It in the N-terminal section; belongs to the PRA-CH family. The protein in the C-terminal section; belongs to the PRA-PH family.

It localises to the cytoplasm. It catalyses the reaction 1-(5-phospho-beta-D-ribosyl)-ATP + H2O = 1-(5-phospho-beta-D-ribosyl)-5'-AMP + diphosphate + H(+). The enzyme catalyses 1-(5-phospho-beta-D-ribosyl)-5'-AMP + H2O = 1-(5-phospho-beta-D-ribosyl)-5-[(5-phospho-beta-D-ribosylamino)methylideneamino]imidazole-4-carboxamide. It functions in the pathway amino-acid biosynthesis; L-histidine biosynthesis; L-histidine from 5-phospho-alpha-D-ribose 1-diphosphate: step 2/9. The protein operates within amino-acid biosynthesis; L-histidine biosynthesis; L-histidine from 5-phospho-alpha-D-ribose 1-diphosphate: step 3/9. The polypeptide is Histidine biosynthesis bifunctional protein HisIE (Prochlorococcus marinus (strain SARG / CCMP1375 / SS120)).